Here is a 414-residue protein sequence, read N- to C-terminus: GLABROUS1 enhancer-binding protein-like 3 (414 aa).

2 disordered regions span residues 36 to 57 and 167 to 191; these read QLRTTTTRTTTTRTTPLSLSSS and QAKDVPSGEPETNDVPCEEQDDRDV. Positions 38 to 50 are enriched in low complexity; sequence RTTTTRTTTTRTT. The tract at residues 382–403 is non-canonical leucine-zipper; it reads LINEWKALFVDEQRLCVKKLTF.

Belongs to the GeBP family. Homo- and heterodimers. Interacts with GEBP, GPL1 and GPL2. Interacts with GEBP. In terms of tissue distribution, expressed in the apical meristem and young leaf primordia. Detected in the vascular tissues of rosette leaves, in primary and secondary roots and at the base of flowers and siliques.

It localises to the nucleus. Its function is as follows. Probable transcription factor. Involved in stress responses. Plays a repressive role in cell expansion by counteracting the positive role of CPR5 in this process, but does not regulate cell proliferation or endoreduplication. The chain is GLABROUS1 enhancer-binding protein-like 3 from Arabidopsis thaliana (Mouse-ear cress).